The following is a 413-amino-acid chain: Putative competence-damage inducible protein (413 aa).

This sequence belongs to the CinA family.

This Lacticaseibacillus paracasei (strain ATCC 334 / BCRC 17002 / CCUG 31169 / CIP 107868 / KCTC 3260 / NRRL B-441) (Lactobacillus paracasei) protein is Putative competence-damage inducible protein.